A 609-amino-acid chain; its full sequence is Serine/threonine-protein phosphatase 4 regulatory subunit 2 (609 aa).

S68 carries the post-translational modification Phosphoserine. Residues N175 to T569 form a disordered region. Residues G183–A194 are compositionally biased toward low complexity. Basic and acidic residues predominate over residues R201 to A225. Residues S223 and S226 each carry the phosphoserine modification. Residues V233–K244 are compositionally biased toward basic and acidic residues. A Phosphoserine modification is found at S252. Acidic residues predominate over residues E258–D270. 2 stretches are compositionally biased toward basic and acidic residues: residues I310–G351 and E375–D400. A compositionally biased stretch (acidic residues) spans I401–P410. Positions K414–A462 are enriched in basic and acidic residues. T602 is modified (phosphothreonine). S603 carries the post-translational modification Phosphoserine.

Belongs to the PPP4R2 family. In terms of assembly, serine/threonine-protein phosphatase 4 (PP4) occurs in different assemblies of the catalytic and one or more regulatory subunits. Probably part of a PP4 PPP4C-PPP4R2-PPP4R3 complex containing Pp4-19C, PPP4R2r and flfl.

Its function is as follows. Regulatory subunit of serine/threonine-protein phosphatase 4 (PP4). The probable PP4 complex Pp4-19C-PPP4R2r-flfl (PPP4C-PPP4R2-PPP4R3) is required to prevent caspase induced cell death (in vitro). The sequence is that of Serine/threonine-protein phosphatase 4 regulatory subunit 2 (PPP4R2r) from Drosophila melanogaster (Fruit fly).